Consider the following 448-residue polypeptide: Adenylosuccinate synthetase (448 aa).

GTP contacts are provided by residues 36–42 and 64–66; these read GDEGKGK and GHT. Residue Asp37 is the Proton acceptor of the active site. Residues Asp37 and Gly64 each contribute to the Mg(2+) site. Residues 37–40, 62–65, Thr154, Arg168, Asn246, Thr261, and Arg325 contribute to the IMP site; these read DEGK and NAGH. The active-site Proton donor is His65. 321 to 327 contacts substrate; that stretch reads VTTKRKR. Residues Arg327, 353–355, and 436–438 each bind GTP; these read KLD and GVG.

It belongs to the adenylosuccinate synthetase family. Homodimer. It depends on Mg(2+) as a cofactor.

Its subcellular location is the cytoplasm. The enzyme catalyses IMP + L-aspartate + GTP = N(6)-(1,2-dicarboxyethyl)-AMP + GDP + phosphate + 2 H(+). It functions in the pathway purine metabolism; AMP biosynthesis via de novo pathway; AMP from IMP: step 1/2. Functionally, plays an important role in the de novo pathway and in the salvage pathway of purine nucleotide biosynthesis. Catalyzes the first committed step in the biosynthesis of AMP from IMP. The protein is Adenylosuccinate synthetase of Drosophila ananassae (Fruit fly).